A 173-amino-acid chain; its full sequence is T-cell receptor beta-2 chain C region (173 aa).

Positions 1–146 (EDLRNVTPPK…GVLSATILYE (146 aa)) are c region. N-linked (GlcNAc...) asparagine glycosylation is found at Asn-67 and Asn-116. Residues 147–168 (ILLGKATLYAVLVSGLVLMAMV) form a helical membrane-spanning segment. The Cytoplasmic segment spans residues 169–173 (KKKNS).

It is found in the membrane. This is T-cell receptor beta-2 chain C region from Mus musculus (Mouse).